The sequence spans 72 residues: UPF0270 protein YheU (72 aa).

The protein belongs to the UPF0270 family.

This chain is UPF0270 protein YheU, found in Shigella flexneri serotype 5b (strain 8401).